The primary structure comprises 106 residues: Guanyl-specific ribonuclease Th1 (106 aa).

2 cysteine pairs are disulfide-bonded: cysteine 5–cysteine 103 and cysteine 23–cysteine 84. Residue histidine 39 is part of the active site. Glutamate 58 (proton acceptor) is an active-site residue. The active-site Proton donor is the histidine 92.

This sequence belongs to the ribonuclease N1/T1 family.

The enzyme catalyses [RNA] containing guanosine + H2O = an [RNA fragment]-3'-guanosine-3'-phosphate + a 5'-hydroxy-ribonucleotide-3'-[RNA fragment].. The polypeptide is Guanyl-specific ribonuclease Th1 (Trichoderma harzianum (Hypocrea lixii)).